Consider the following 125-residue polypeptide: Small ribosomal subunit protein bS6m (125 aa).

Belongs to the bacterial ribosomal protein bS6 family. In terms of assembly, component of the mitochondrial small ribosomal subunit (mt-SSU). Mature mammalian 55S mitochondrial ribosomes consist of a small (28S) and a large (39S) subunit. The 28S small subunit contains a 12S ribosomal RNA (12S mt-rRNA) and 30 different proteins. The 39S large subunit contains a 16S rRNA (16S mt-rRNA), a copy of mitochondrial valine transfer RNA (mt-tRNA(Val)), which plays an integral structural role, and 52 different proteins.

It is found in the mitochondrion. The polypeptide is Small ribosomal subunit protein bS6m (MRPS6) (Homo sapiens (Human)).